The following is a 411-amino-acid chain: uncharacterized protein (411 aa).

The first 21 residues, 1–21, serve as a signal peptide directing secretion; the sequence is MHSRILLLLLMFAFNVGLINC. Positions 28–67 constitute an EGF-like domain; the sequence is PQSNCKIRCENGGMCVFDLERPDFHSCICLLGVYTGDRCQ. Cystine bridges form between C32-C42, C36-C54, and C56-C66. Polar residues predominate over residues 78–97; the sequence is TATSDETSHPMNIQHQQSQA. 2 disordered regions span residues 78–312 and 337–375; these read TATS…EPIR and HPIE…EYGM. A compositionally biased stretch (basic and acidic residues) spans 100 to 230; it reads DDARRRDDER…VEKELNDKRT (131 aa). A compositionally biased stretch (acidic residues) spans 237-266; that stretch reads FEYEGGDEEYPQVAEKEDEYDEGYETDNTE. Positions 267–276 are enriched in low complexity; that stretch reads DVTITTTKTT.

This is an uncharacterized protein from Caenorhabditis elegans.